Reading from the N-terminus, the 560-residue chain is Oxygen-dependent choline dehydrogenase (560 aa).

An FAD-binding site is contributed by 6–35; that stretch reads DYIIIGGGSAGSVLGGRLSEDVSNNVLVLE. Residue H472 is the Proton acceptor of the active site.

It belongs to the GMC oxidoreductase family. FAD serves as cofactor.

The enzyme catalyses choline + A = betaine aldehyde + AH2. The catalysed reaction is betaine aldehyde + NAD(+) + H2O = glycine betaine + NADH + 2 H(+). It participates in amine and polyamine biosynthesis; betaine biosynthesis via choline pathway; betaine aldehyde from choline (cytochrome c reductase route): step 1/1. In terms of biological role, involved in the biosynthesis of the osmoprotectant glycine betaine. Catalyzes the oxidation of choline to betaine aldehyde and betaine aldehyde to glycine betaine at the same rate. In Staphylococcus xylosus, this protein is Oxygen-dependent choline dehydrogenase.